Reading from the N-terminus, the 316-residue chain is Endochitinase WIN8 (316 aa).

The N-terminal stretch at 1–23 is a signal peptide; the sequence is MRFWALTVLSLLLSLLLGVSSDT. The Chitin-binding type-1 domain maps to 24 to 64; it reads AQCGSQAGNATCPNDLCCSSGGYCGLTVAYCCAGCVSQCRN. 7 disulfides stabilise this stretch: Cys-26–Cys-41, Cys-35–Cys-47, Cys-40–Cys-54, Cys-58–Cys-62, Cys-84–Cys-146, Cys-158–Cys-168, and Cys-266–Cys-298. Glu-128 serves as the catalytic Proton donor.

Belongs to the glycosyl hydrolase 19 family. Chitinase class I subfamily.

The enzyme catalyses Random endo-hydrolysis of N-acetyl-beta-D-glucosaminide (1-&gt;4)-beta-linkages in chitin and chitodextrins.. Functionally, defense against chitin-containing fungal pathogens. This is Endochitinase WIN8 (WIN8) from Populus trichocarpa (Western balsam poplar).